A 135-amino-acid chain; its full sequence is Small ribosomal subunit protein uS9 (135 aa).

Residues 108–118 (VGDSRRTEPHK) show a composition bias toward basic and acidic residues. The segment at 108–135 (VGDSRRTEPHKPNRSTKGPRAKRQKSYR) is disordered. Over residues 119-135 (PNRSTKGPRAKRQKSYR) the composition is skewed to basic residues.

The protein belongs to the universal ribosomal protein uS9 family. In terms of assembly, part of the 30S ribosomal subunit.

In Thermococcus kodakarensis (strain ATCC BAA-918 / JCM 12380 / KOD1) (Pyrococcus kodakaraensis (strain KOD1)), this protein is Small ribosomal subunit protein uS9.